The primary structure comprises 235 residues: MKKTVIASTLAVSLGIAGYGLSGHEAHASETTNVDKAHLVDLAQHNPEELNAKPVQAGAYDIHFVDNGYQYNFTSNGSEWSWSYAVAGSDADYTESSSNQEVSANTQSSNTNVQAVSAPTSSESRSYSTSTTSYSAPSHNYSSHSSSVRLSNGNTAGSVGSYAAAQMAARTGVSASTWEHIIARESNGQLHARNASGAAGLFQTMPGWGSTGSVNDQINAAYKAYKAQGLSAWGM.

A signal peptide spans Met-1–Ala-28. The span at Glu-95 to Ala-115 shows a compositional bias: polar residues. Positions Glu-95–Leu-150 are disordered. Residues Ser-117 to Ser-147 show a composition bias toward low complexity.

This sequence belongs to the transglycosylase family. IsaA subfamily.

The protein localises to the secreted. Functionally, is able to cleave peptidoglycan. The polypeptide is Probable transglycosylase IsaA (isaA) (Staphylococcus epidermidis (strain ATCC 35984 / DSM 28319 / BCRC 17069 / CCUG 31568 / BM 3577 / RP62A)).